A 218-amino-acid polypeptide reads, in one-letter code: Ribose-5-phosphate isomerase A (218 aa).

Substrate-binding positions include 28–31 (TGST), 81–84 (DSAD), and 94–97 (KGKG). The active-site Proton acceptor is the Glu-103. Lys-121 provides a ligand contact to substrate.

This sequence belongs to the ribose 5-phosphate isomerase family. Homodimer.

It catalyses the reaction aldehydo-D-ribose 5-phosphate = D-ribulose 5-phosphate. The protein operates within carbohydrate degradation; pentose phosphate pathway; D-ribose 5-phosphate from D-ribulose 5-phosphate (non-oxidative stage): step 1/1. Catalyzes the reversible conversion of ribose-5-phosphate to ribulose 5-phosphate. The sequence is that of Ribose-5-phosphate isomerase A from Blochmanniella pennsylvanica (strain BPEN).